The sequence spans 633 residues: ATP-dependent RNA helicase mss116, mitochondrial (633 aa).

A mitochondrion-targeting transit peptide spans 1 to 32 (MKTGRTRPLRVFDILVPPWPPTVPHRIKLPRG). The Q motif signature appears at 38–66 (EFYSAITRNWNKLKGLKNCWQIWKDVQEI). In terms of domain architecture, Helicase ATP-binding spans 70–248 (IRKYQGESTV…TAEKLSNIQT (179 aa)). 83–90 (PGNNDGAH) serves as a coordination point for ATP. Positions 195–198 (RPLE) match the DEAD box motif. The Helicase C-terminal domain maps to 262–429 (FLADVKRILQ…NVDLVIQVGL (168 aa)). The interval 567 to 633 (FNYATGNDLN…GGRGGKPRAA (67 aa)) is disordered.

Belongs to the DEAD box helicase family. DDX18/HAS1 subfamily.

The protein localises to the mitochondrion matrix. It carries out the reaction ATP + H2O = ADP + phosphate + H(+). Functionally, ATP-dependent RNA helicase required for mitochondrial splicing of group I and II introns. Also required for efficient mitochondrial translation. The sequence is that of ATP-dependent RNA helicase mss116, mitochondrial (mss116) from Aspergillus oryzae (strain ATCC 42149 / RIB 40) (Yellow koji mold).